A 186-amino-acid polypeptide reads, in one-letter code: Large ribosomal subunit protein uL22 (186 aa).

Residues 159 to 186 form a disordered region; that stretch reads KATDEEPTKKKLSKKKLQRQKEKMMRSE. The span at 177–186 shows a compositional bias: basic and acidic residues; sequence RQKEKMMRSE.

It belongs to the universal ribosomal protein uL22 family.

This chain is Large ribosomal subunit protein uL22 (RpL17), found in Phlebotomus papatasi (Sandfly).